Consider the following 257-residue polypeptide: Transcription factor MYB4 (257 aa).

2 consecutive HTH myb-type domains span residues 9–61 and 62–116; these read KMGL…INYL and RPDI…KKRL. DNA-binding regions (H-T-H motif) lie at residues 37-61 and 89-112; these read WRALPKQAGLLRCGKSCRLRWINYL and WSAIAARLPGRTDNEIKNVWHTHL. The segment at 115 to 179 is disordered; it reads RLDAPAQGGH…VAEEHGNAGI (65 aa). Residues 130–140 are compositionally biased toward basic residues; the sequence is GKKHKKPKSAK. Positions 141 to 170 are enriched in low complexity; sequence KPAAAAAAPPASPERSASSSVTESSMASSV.

It is found in the nucleus. Its function is as follows. Transcriptional activator involved in cold stress response. Regulates positively the expression of genes involved in reactive oxygen species (ROS) scavenging such as peroxidase and superoxide dismutase during cold stress. Transactivates a complex gene network that have major effects on stress tolerance and panicle development. This Oryza sativa subsp. japonica (Rice) protein is Transcription factor MYB4.